The following is a 109-amino-acid chain: uncharacterized protein (109 aa).

The protein localises to the mitochondrion. This is an uncharacterized protein from Saccharomyces cerevisiae (strain ATCC 204508 / S288c) (Baker's yeast).